The following is a 261-amino-acid chain: Small ribosomal subunit protein eS1 (261 aa).

Residues 1 to 18 (MAVGKNKRISKGKKGGKK) show a composition bias toward basic residues. Residues 1 to 23 (MAVGKNKRISKGKKGGKKKAADP) are disordered.

The protein belongs to the eukaryotic ribosomal protein eS1 family. In terms of assembly, component of the small ribosomal subunit. Mature ribosomes consist of a small (40S) and a large (60S) subunit. The 40S subunit contains about 33 different proteins and 1 molecule of RNA (18S). The 60S subunit contains about 49 different proteins and 3 molecules of RNA (25S, 5.8S and 5S).

Its subcellular location is the cytoplasm. This Nicotiana tabacum (Common tobacco) protein is Small ribosomal subunit protein eS1 (cyc07).